Here is a 63-residue protein sequence, read N- to C-terminus: Protein DsrB (63 aa).

Belongs to the DsrB family.

This chain is Protein DsrB, found in Yersinia pseudotuberculosis serotype O:3 (strain YPIII).